A 476-amino-acid chain; its full sequence is Cardiolipin synthase (476 aa).

Transmembrane regions (helical) follow at residues 2 to 22 (HLLI…IIFI) and 31 to 51 (WAWI…YILF). PLD phosphodiesterase domains follow at residues 207–234 (INYR…GDEY) and 389–416 (EKGF…DIRS). Active-site residues include H212, K214, D219, H394, K396, and D401.

This sequence belongs to the phospholipase D family. Cardiolipin synthase subfamily.

The protein resides in the cell membrane. It carries out the reaction 2 a 1,2-diacyl-sn-glycero-3-phospho-(1'-sn-glycerol) = a cardiolipin + glycerol. Catalyzes the reversible phosphatidyl group transfer from one phosphatidylglycerol molecule to another to form cardiolipin (CL) (diphosphatidylglycerol) and glycerol. The sequence is that of Cardiolipin synthase (cls) from Clostridium perfringens (strain SM101 / Type A).